A 458-amino-acid polypeptide reads, in one-letter code: Methionine aminopeptidase 2-2 (458 aa).

Residues 1-14 (MGSKTPERDGHKGQ) show a composition bias toward basic and acidic residues. The tract at residues 1 to 93 (MGSKTPERDG…QSSPPRVPLS (93 aa)) is disordered. Residues 67–82 (QKKKRKSKKKGKKKAA) show a composition bias toward basic residues. H209 provides a ligand contact to substrate. Residues D230, D241, and H310 each contribute to the a divalent metal cation site. H318 is a binding site for substrate. E343 and E439 together coordinate a divalent metal cation.

The protein belongs to the peptidase M24A family. Methionine aminopeptidase eukaryotic type 2 subfamily. It depends on Co(2+) as a cofactor. Zn(2+) is required as a cofactor. Mn(2+) serves as cofactor. The cofactor is Fe(2+).

The protein resides in the cytoplasm. It catalyses the reaction Release of N-terminal amino acids, preferentially methionine, from peptides and arylamides.. Cotranslationally removes the N-terminal methionine from nascent proteins. The N-terminal methionine is often cleaved when the second residue in the primary sequence is small and uncharged (Met-Ala-, Cys, Gly, Pro, Ser, Thr, or Val). The sequence is that of Methionine aminopeptidase 2-2 from Emericella nidulans (strain FGSC A4 / ATCC 38163 / CBS 112.46 / NRRL 194 / M139) (Aspergillus nidulans).